A 363-amino-acid chain; its full sequence is Cobalt-precorrin-5B C(1)-methyltransferase (363 aa).

This sequence belongs to the CbiD family.

The enzyme catalyses Co-precorrin-5B + S-adenosyl-L-methionine = Co-precorrin-6A + S-adenosyl-L-homocysteine. It functions in the pathway cofactor biosynthesis; adenosylcobalamin biosynthesis; cob(II)yrinate a,c-diamide from sirohydrochlorin (anaerobic route): step 6/10. Its function is as follows. Catalyzes the methylation of C-1 in cobalt-precorrin-5B to form cobalt-precorrin-6A. In Treponema denticola (strain ATCC 35405 / DSM 14222 / CIP 103919 / JCM 8153 / KCTC 15104), this protein is Cobalt-precorrin-5B C(1)-methyltransferase.